The following is a 97-amino-acid chain: Putative membrane protein insertion efficiency factor (97 aa).

Residues 68–97 (VPGTELNTAPRSGQACNPTESTHSTTQTRH) form a disordered region. Positions 72 to 97 (ELNTAPRSGQACNPTESTHSTTQTRH) are enriched in polar residues.

Belongs to the UPF0161 family.

The protein resides in the cell inner membrane. Functionally, could be involved in insertion of integral membrane proteins into the membrane. The protein is Putative membrane protein insertion efficiency factor of Marinobacter nauticus (strain ATCC 700491 / DSM 11845 / VT8) (Marinobacter aquaeolei).